A 624-amino-acid chain; its full sequence is Chaperone protein HtpG (624 aa).

The interval 1–336 is a; substrate-binding; the sequence is MKGQETRGFQ…SSDLSLNVSR (336 aa). Residues 337–552 form a b region; it reads EILQDSTVTR…ADEMSTQMAK (216 aa). The segment at 553–624 is c; that stretch reads LFAAAGQKVP…IRRMNQLLVS (72 aa).

The protein belongs to the heat shock protein 90 family. As to quaternary structure, homodimer.

Its subcellular location is the cytoplasm. Molecular chaperone. Has ATPase activity. This chain is Chaperone protein HtpG, found in Shigella dysenteriae serotype 1 (strain Sd197).